The following is a 963-amino-acid chain: Isoleucine--tRNA ligase (963 aa).

The 'HIGH' region motif lies at 66–76; the sequence is PYANGDIHIGH. Glu-596 provides a ligand contact to L-isoleucyl-5'-AMP. The 'KMSKS' region signature appears at 637-641; it reads KMSKS. Residue Lys-640 participates in ATP binding. Zn(2+)-binding residues include Cys-926, Cys-929, Cys-946, and Cys-949.

Belongs to the class-I aminoacyl-tRNA synthetase family. IleS type 1 subfamily. Monomer. It depends on Zn(2+) as a cofactor.

Its subcellular location is the cytoplasm. The catalysed reaction is tRNA(Ile) + L-isoleucine + ATP = L-isoleucyl-tRNA(Ile) + AMP + diphosphate. In terms of biological role, catalyzes the attachment of isoleucine to tRNA(Ile). As IleRS can inadvertently accommodate and process structurally similar amino acids such as valine, to avoid such errors it has two additional distinct tRNA(Ile)-dependent editing activities. One activity is designated as 'pretransfer' editing and involves the hydrolysis of activated Val-AMP. The other activity is designated 'posttransfer' editing and involves deacylation of mischarged Val-tRNA(Ile). The sequence is that of Isoleucine--tRNA ligase from Cupriavidus pinatubonensis (strain JMP 134 / LMG 1197) (Cupriavidus necator (strain JMP 134)).